Here is a 285-residue protein sequence, read N- to C-terminus: Ribonuclease H1 (285 aa).

Residues 72–126 (RSSSSPDGSKGQESAHEQKSQAKTSKRPREPLGEGEELPEPGPKHTRQDTEPAAV) form a disordered region. In terms of domain architecture, RNase H type-1 spans 135-281 (MGESVIVYTD…ADRLAREGAK (147 aa)). Positions 144, 185, 209, and 273 each coordinate Mg(2+).

This sequence belongs to the RNase H family. In terms of assembly, monomer. The cofactor is Mg(2+).

The protein localises to the cytoplasm. The enzyme catalyses Endonucleolytic cleavage to 5'-phosphomonoester.. With respect to regulation, in the presence of magnesium, manganese is inhibitory. Endonuclease that specifically degrades the RNA of RNA-DNA hybrids. Plays a role in RNA polymerase II (RNAp II) transcription termination by degrading R-loop RNA-DNA hybrid formation at G-rich pause sites located downstream of the poly(A) site and behind the elongating RNAp II. This is Ribonuclease H1 (Rnaseh1) from Mus musculus (Mouse).